Here is a 278-residue protein sequence, read N- to C-terminus: Orotidine 5'-phosphate decarboxylase (278 aa).

Substrate contacts are provided by residues Asp-40, 62 to 64 (KTH), 93 to 102 (DRKFADIGNT), Tyr-223, and Arg-242. Lys-95 functions as the Proton donor in the catalytic mechanism.

Belongs to the OMP decarboxylase family.

It catalyses the reaction orotidine 5'-phosphate + H(+) = UMP + CO2. The protein operates within pyrimidine metabolism; UMP biosynthesis via de novo pathway; UMP from orotate: step 2/2. This Schizophyllum commune (Split gill fungus) protein is Orotidine 5'-phosphate decarboxylase (URA1).